Reading from the N-terminus, the 347-residue chain is CDK2-associated and cullin domain-containing protein 1 (347 aa).

Over residues 1–11 (MEESMEEEEML) the composition is skewed to acidic residues. 2 disordered regions span residues 1–63 (MEES…LPGG) and 320–347 (RGDQ…RGYR). The span at 34 to 49 (QPPPAPPLPPPPPPRP) shows a compositional bias: pro residues.

The protein belongs to the cullin family. In terms of assembly, interacts with CDK2.

Cell cycle associated protein capable of promoting cell proliferation through the activation of CDK2 at the G1/S phase transition. The polypeptide is CDK2-associated and cullin domain-containing protein 1 (Cacul1) (Rattus norvegicus (Rat)).